The primary structure comprises 910 residues: DNA mismatch repair protein MutS (910 aa).

The span at 1-11 (MEAKVEEKEPE) shows a compositional bias: basic and acidic residues. The interval 1–21 (MEAKVEEKEPEPVENAGPDAP) is disordered. 658–665 (GPNMGGKS) provides a ligand contact to ATP.

The protein belongs to the DNA mismatch repair MutS family.

This protein is involved in the repair of mismatches in DNA. It is possible that it carries out the mismatch recognition step. This protein has a weak ATPase activity. This Brucella suis (strain ATCC 23445 / NCTC 10510) protein is DNA mismatch repair protein MutS.